Here is a 1062-residue protein sequence, read N- to C-terminus: MAGNEWINGYLEAILDSQAQGIEETQQKPQASVNLREGDGQYFNPTKYFVEEVVTGVDETDLHRTWLKVVATRNSRERNSRLENMCWRIWHLTRKKKQLEWEDSQRIANRRLEREQGRRDATEDLSEDLSEGEKGDGLGEIVQPETPRRQLQRNLSNLEIWSDDKKENRLYVVLISLHGLVRGENMELGSDSDTGGQVKYVVELARALARMPGVYRVDLFTRQICSSEVDWSYAEPTEMLTTAEDCDGDETGESSGAYIIRIPFGPRDKYLNKEILWPFVQEFVDGALAHILNMSKVLGEQIGKGKPVWPYVIHGHYADAGDSAALLSGALNVPMVLTGHSLGRNKLEQLLKQGRQSKEDINSTYKIKRRIEAEELSLDAAELVITSTRQEIDEQWGLYDGFDVKLEKVLRARARRGVNCHGRFMPRMAVIPPGMDFTNVEVQEDTPEGDGDLASLVGGTEGSSPKAVPTIWSEVMRFFTNPHKPMILALSRPDPKKNITTLLKAFGECRPLRELANLTLIMGNRDDIDELSSGNASVLTTVLKLIDKYDLYGSVAYPKHHKQSDVPDIYRLAANTKGVFINPALVEPFGLTLIEAAAHGLPMVATKNGGPVDIHRALHNGLLVDPHDQEAIANALLKLVSEKNLWHECRINGWKNIHLFSWPEHCRTYLTRIAACRMRHPQWQTDADEVAAQDDEFSLNDSLKDVQDMSLRLSMDGDKPSLNGSLEPNSADPVKQIMSRMRTPEIKSKPELQGKKQSDNLGSKYPVLRRRERLVVLAVDCYDNEGAPDEKAMVPMIQNIIKAVRSDPQMAKNSGFAISTSMPLDELTRFLKSAKIQVSEFDTLICSSGSEVYYPGGEEGKLLPDPDYSSHIDYRWGMEGLKNTVWKLMNTTAVGGEARNKGSPSLIQEDQASSNSHCVAYMIKDRSKVMRVDDLRQKLRLRGLRCHPMYCRNSTRMQIVPLLASRSQALRYLFVRWRLNVANMYVVVGDRGDTDYEELISGTHKTVIVKGLVTLGSDALLRSTDLRDDIVPSESPFIGFLKVDSPVKEITDIFKQLSKATA.

Positions Glu-113–Thr-122 are enriched in basic and acidic residues. A disordered region spans residues Glu-113–Ile-141. A phosphoserine mark is found at Ser-126, Ser-130, and Ser-156. Residues Met-715 to Lys-735 form a disordered region.

The protein belongs to the glycosyltransferase 1 family. As to quaternary structure, homodimer or homotetramer.

It carries out the reaction beta-D-fructose 6-phosphate + UDP-alpha-D-glucose = sucrose 6(F)-phosphate + UDP + H(+). It functions in the pathway glycan biosynthesis; sucrose biosynthesis; sucrose from D-fructose 6-phosphate and UDP-alpha-D-glucose: step 1/2. Activity is regulated by phosphorylation and moderated by concentration of metabolites and light. Functionally, plays a role in photosynthetic sucrose synthesis by catalyzing the rate-limiting step of sucrose biosynthesis from UDP-glucose and fructose- 6-phosphate. Involved in the regulation of carbon partitioning in the leaves of plants. May regulate the synthesis of sucrose and therefore play a major role as a limiting factor in the export of photoassimilates out of the leaf. Plays a role for sucrose availability that is essential for plant growth and fiber elongation. This is Probable sucrose-phosphate synthase 3 (SPS3) from Arabidopsis thaliana (Mouse-ear cress).